A 464-amino-acid chain; its full sequence is NADH-quinone oxidoreductase subunit N (464 aa).

A run of 13 helical transmembrane segments spans residues 5-25 (MLLA…VLFL), 31-51 (LLSA…PASL), 63-83 (LFAR…CLLS), 96-116 (EYAA…ASTS), 117-137 (LVSL…LIAV), 152-172 (LLPG…VYAA), 188-208 (GAPM…AAAF), 242-262 (VFAV…RPLL), 286-303 (MLAY…LAVL), 312-332 (AGLF…GLLA), 358-378 (AVLL…AGFM), 393-415 (VGLV…RPVL), and 436-456 (LIFV…GPFF).

Belongs to the complex I subunit 2 family. NDH-1 is composed of 14 different subunits. Subunits NuoA, H, J, K, L, M, N constitute the membrane sector of the complex.

Its subcellular location is the cell inner membrane. It carries out the reaction a quinone + NADH + 5 H(+)(in) = a quinol + NAD(+) + 4 H(+)(out). Functionally, NDH-1 shuttles electrons from NADH, via FMN and iron-sulfur (Fe-S) centers, to quinones in the respiratory chain. The immediate electron acceptor for the enzyme in this species is believed to be ubiquinone. Couples the redox reaction to proton translocation (for every two electrons transferred, four hydrogen ions are translocated across the cytoplasmic membrane), and thus conserves the redox energy in a proton gradient. This Syntrophotalea carbinolica (strain DSM 2380 / NBRC 103641 / GraBd1) (Pelobacter carbinolicus) protein is NADH-quinone oxidoreductase subunit N.